The primary structure comprises 611 residues: Immunoglobulin superfamily member 8 (611 aa).

The signal sequence occupies residues 1-25 (MGVPSPTPLSSLLLLLLILGTRCYA). Ig-like C2-type domains follow at residues 26 to 143 (RQVH…AKVE), 160 to 284 (PRGR…WVQV), 301 to 422 (SQLA…EAAS), and 429 to 554 (PVHV…ADYS). Residues 26–577 (RQVHVPRGPL…VYPYTHAVDT (552 aa)) are Extracellular-facing. A disulfide bridge connects residues Cys-47 and Cys-125. Residues Asn-48 and Asn-137 are each glycosylated (N-linked (GlcNAc...) asparagine). A disulfide bridge links Cys-184 with Cys-268. The EWI motif motif lies at 272–274 (EWI). Intrachain disulfides connect Cys-324-Cys-404 and Cys-460-Cys-542. Asn-325 is a glycosylation site (N-linked (GlcNAc...) asparagine). Residue Ser-516 is modified to Phosphoserine. Residues 578–598 (LFVPLLVGTGVALVTGASVLA) form a helical membrane-spanning segment. Topologically, residues 599–611 (TITCCFMKRMRKR) are cytoplasmic. 2 S-palmitoyl cysteine lipidation sites follow: Cys-602 and Cys-603.

As to quaternary structure, interacts directly with CD82 and CD9/tetraspanin-29. Also interacts with integrin alpha-3/beta-1 and integrin alpha-4/beta-1. Part of a complex composed of CD9, PTGFRN and CD81. Interacts with CD81/tetraspanin-28. In terms of tissue distribution, expressed in lymphocytes as well as in many tissues with higher expression in brain. Detected in all regions of the brain with weak expression in the pituitary. Expressed selectively by neurons but not by glial cells. Expressed in myoblasts (at protein level).

Its subcellular location is the cell membrane. Functionally, member of the immunoglobulin superfamily (IgSF) that links tetraspanin-enriched microdomains to the actin cytoskeleton and plays several important roles in innate and adaptive immunity. Acts as an inducible receptor of HSPA8 on dendritic cells to enhance the CCL21/SLC-dependent migration of activated mature dendritic cells while attenuating their antigen-specific stimulatory capacities. In complex with alpha-actinins ACTN1 and ACTN4, regulates actin dynamics in the immune synapse and subsequent T-cell activation. Inhibits the entry of several viruses such as hepatitis C Virus (HCV) or HIV-1. Mechanistically, promotes a change in CD81 organization at the plasma membrane by significantly restricting its diffusion which in turn influences CD81 interaction with Claudin-1/CLDN1, preventing CLDN1 from acting as a co-receptor required for HCV entry. Accumulates at the presynaptic terminal, the producer cell side of the virological synapse, to prevent HIV-1 Env-mediated cell-cell fusion. Highly expressed on malignant cells with antigen presentation defects, interacts with NK receptor KLRA9 to suppress NK-cell cytotoxicity. May participate in the regulation of neurite outgrowth and maintenance of the neural network in the adult brain. This is Immunoglobulin superfamily member 8 (Igsf8) from Mus musculus (Mouse).